The sequence spans 331 residues: Low affinity immunoglobulin epsilon Fc receptor (331 aa).

Residues 1–23 are Cytoplasmic-facing; it reads MEENEYSGYWEPPRKRCCCARRG. S-palmitoyl cysteine attachment occurs at residues Cys-17 and Cys-18. A helical; Signal-anchor for type II membrane protein membrane pass occupies residues 24–49; sequence TQLMLVGLLSTAMWAGLLALLLLWHW. Residues 50-331 are Extracellular-facing; the sequence is ETEKNLKQLG…PTRPTPKSEP (282 aa). An N-linked (GlcNAc...) asparagine glycan is attached at Asn-65. Repeats lie at residues 71 to 91, 92 to 112, and 113 to 133; these read KDLQKFQSNQLAQKSQVVQMS, QNLQELQAEQKQMKAQDSRLS, and QNLTGLQEDLRNAQSQNSKLS. Asn-114 carries N-linked (GlcNAc...) asparagine glycosylation. Disulfide bonds link Cys-183–Cys-311, Cys-186–Cys-197, Cys-214–Cys-305, and Cys-282–Cys-296. Positions 185–298 constitute a C-type lectin domain; sequence ICPKNWLHFQ…GQWNDAFCRS (114 aa). Ca(2+) contacts are provided by Glu-272, Asn-292, and Asp-293. Residue Ser-319 is glycosylated (O-linked (Xyl...) (chondroitin sulfate) serine).

In terms of assembly, homotrimer. Interacts (via C-type lectin domain) with IGHE (via CH3 region); this interaction regulates IgE homeostasis. Interacts (via C-terminus) with CR2/CD21 (via Sushi domain 1 and 2). Post-translationally, N- and O-glycosylated.

Its subcellular location is the cell membrane. The protein localises to the secreted. Functionally, low-affinity receptor for immunoglobulin E (IgE) and CR2/CD21. Has essential roles in the regulation of IgE production and in the differentiation of B cells. On B cells, initiates IgE-dependent antigen uptake and presentation to T cells. On macrophages, upon IgE binding and antigen cross-linking induces intracellular killing of parasites through activation of L-Arginine-nitric oxide pathway. This Mus musculus (Mouse) protein is Low affinity immunoglobulin epsilon Fc receptor (Fcer2).